Reading from the N-terminus, the 469-residue chain is Type II secretion system protein HxcR (469 aa).

Residue 246-253 coordinates ATP; it reads GPTGSGKT.

Belongs to the GSP E family.

Its subcellular location is the cytoplasm. It catalyses the reaction ATP + H2O + cellular proteinSide 1 = ADP + phosphate + cellular proteinSide 2.. ATPase component of the type II secretion system required for the energy-dependent secretion of extracellular factors from the periplasm. Acts as a molecular motor to provide the energy that is required for the export of proteins. The Hxc system is involved in the secretion of low-molecular-weight alkaline phosphatase L-AP (LapA). Is probably also involved in the secretion of the phosphate-binding protein PstS. The polypeptide is Type II secretion system protein HxcR (Pseudomonas aeruginosa (strain ATCC 15692 / DSM 22644 / CIP 104116 / JCM 14847 / LMG 12228 / 1C / PRS 101 / PAO1)).